A 347-amino-acid chain; its full sequence is MKRRKWLNITWAVTIYIFFGMINVSSYNEGRKRKNKMYSFVINGYNEYKNKYSFLRKPKNVVHMENNNFDMDRLSLLKNLEEESKIITEGEGWDKTHPLLEIKDLHAIEIEGEKEILKGINLEIYLGEKHTIMGRNGSGKSTLAKVIAGHPYYKITKGIIKYKGLDLINLPVNVRSLCGIFLAFQYPVELPMVKNNEFLRAALNSHRRHRNEEEISVSEFNLMMIEEIKKVGLSSEFLDRPVNYGFSGGEKKRNEILQMLILKPTFCILDETDSGLDVDSFKLTSNVITNFSNDNNSFLIVTHYKKLLELLKPNFIHIMHQGKIIESGDFSLVDKIENKGYSQFLKE.

Residues 100 to 346 (LEIKDLHAIE…ENKGYSQFLK (247 aa)) enclose the ABC transporter domain. 134–141 (GRNGSGKS) lines the ATP pocket.

Belongs to the ABC transporter superfamily. Ycf16 family. As to quaternary structure, component of a complex composed of SufB, SufC and SufD in a stoichiometric ratio of 1:2:1. Interacts with SufB. Interacts with SufD; the interaction enhances the ATPase activity of SufC. In terms of processing, proteolytically cleaved.

It localises to the plastid. Its subcellular location is the apicoplast. The enzyme catalyses ATP + H2O = ADP + phosphate + H(+). It participates in cofactor biosynthesis; iron-sulfur cluster biosynthesis. Participates in the sulfur mobilization (SUF) pathway for iron-sulfur (Fe-S) cluster biogenesis. As part of a complex consisting of SufB-SufC(2)-SufD, involved in assembly of [4Fe-4S] clusters. Exhibits ATPase activity. This is Iron-sulfur cluster assembly protein SufC from Plasmodium falciparum (isolate 3D7).